A 183-amino-acid chain; its full sequence is MVVGIEGIITKKEPTFIIVKCASGLSYGIFISLFCSAKIQTQEKHEFFITQIIKEDSNKFYGFLDKDEQKMFEMLLKVNGVGANTAMAVCSSLDINSFYKALSLGDESVLKKVPGIGPKSAKRIIVELSDTRTKLENVSDDKSEALAALLTLGFKQEKIISVLASAQATGTSELIKEALKKLR.

The interval 1–64 is domain I; sequence MVVGIEGIIT…EDSNKFYGFL (64 aa). The interval 65 to 139 is domain II; that stretch reads DKDEQKMFEM…DTRTKLENVS (75 aa). A region of interest (flexible linker) is located at residue serine 139. The segment at 139–183 is domain III; sequence SDDKSEALAALLTLGFKQEKIISVLASAQATGTSELIKEALKKLR.

This sequence belongs to the RuvA family. As to quaternary structure, homotetramer. Forms an RuvA(8)-RuvB(12)-Holliday junction (HJ) complex. HJ DNA is sandwiched between 2 RuvA tetramers; dsDNA enters through RuvA and exits via RuvB. An RuvB hexamer assembles on each DNA strand where it exits the tetramer. Each RuvB hexamer is contacted by two RuvA subunits (via domain III) on 2 adjacent RuvB subunits; this complex drives branch migration. In the full resolvosome a probable DNA-RuvA(4)-RuvB(12)-RuvC(2) complex forms which resolves the HJ.

It localises to the cytoplasm. In terms of biological role, the RuvA-RuvB-RuvC complex processes Holliday junction (HJ) DNA during genetic recombination and DNA repair, while the RuvA-RuvB complex plays an important role in the rescue of blocked DNA replication forks via replication fork reversal (RFR). RuvA specifically binds to HJ cruciform DNA, conferring on it an open structure. The RuvB hexamer acts as an ATP-dependent pump, pulling dsDNA into and through the RuvAB complex. HJ branch migration allows RuvC to scan DNA until it finds its consensus sequence, where it cleaves and resolves the cruciform DNA. The chain is Holliday junction branch migration complex subunit RuvA from Campylobacter jejuni subsp. doylei (strain ATCC BAA-1458 / RM4099 / 269.97).